We begin with the raw amino-acid sequence, 536 residues long: MAHCVTLVQLSVSCDHLIDKDIGSKSDPLCVLLQDVGGAWAELCRTERVRNCSSPAFSKTLQIEYYFETVQKLRFGIYDIDNKTPELGDDDFLGGAECSLGQIVSSQTLTLPLMLKPGKPAGRGTITVSAQELKDSRVVTMEVEARNLDKKDFLGKSDPFLEFFRQGDGKWHLAYRTEVVKNNLNPTWKRFSVSLQHFCGGDLNTPIQVRCSDYDSDGSHDLIGTFHTTLAQLQAVPAEFECIHPEKQQRKKSYKNSGTVCVKTCRVETEYSFLDYVMGGCQINFTVGVDFTGSNGDPSSPDSLHYLSPTGVNEYLTALWSVGSVVQDYDSDKLFPAFGFGAQVPPDWQVSHEFALNFNPSNPYCAGIQGIVDAYRQALPQVRLYGPTNFAPIINHVARFAAQAAQQRTASQYFVLLLLTDGAVTDVEATCKAVVEASKLPMSVIIVGVGGADFEVMEQLDADGGPLRTRSGEAAARDIVQFVPYRRFQNAPRETLAMTVLAEVPTQMVSYFKAQGWAPLKTLPAPAKGPAQAPQV.

2 C2 domains span residues 1-113 (MAHC…TLPL) and 122-244 (GRGT…ECIH). 7 residues coordinate Ca(2+): D21, D27, D79, D81, D91, D152, and D158. The residue at position 170 (K170) is an N6-acetyllysine. D213, D215, and D221 together coordinate Ca(2+). One can recognise a VWFA domain in the interval 282–484 (QINFTVGVDF…AARDIVQFVP (203 aa)).

The protein belongs to the copine family. Homodimer; homodimerizes via its C2 domains. Interacts with p65/RELA (via N-terminus); this interaction induces proteolytic cleavage of p65/RELA subunit and inhibition of NF-kappa-B transcriptional activity. Interacts (via VWFA domain) with ACTB, CCDC22, MYCBP2, PPP5C, RDX and UBE2O. The cofactor is Ca(2+). As to expression, expressed in liver, brain, heart, intestine, kidney and lung (at protein level).

It localises to the nucleus. The protein localises to the cytoplasm. The protein resides in the cell membrane. Functionally, calcium-dependent phospholipid-binding protein that plays a role in calcium-mediated intracellular processes. Involved in the TNF-alpha receptor signaling pathway in a calcium-dependent manner. Exhibits calcium-dependent phospholipid binding properties. Plays a role in neuronal progenitor cell differentiation; induces neurite outgrowth via a AKT-dependent signaling cascade and calcium-independent manner. May recruit target proteins to the cell membrane in a calcium-dependent manner. May function in membrane trafficking. Involved in TNF-alpha-induced NF-kappa-B transcriptional repression by inducing endoprotease processing of the transcription factor NF-kappa-B p65/RELA subunit. Also induces endoprotease processing of NF-kappa-B p50/NFKB1, p52/NFKB2, RELB and REL. The chain is Copine-1 from Rattus norvegicus (Rat).